The primary structure comprises 148 residues: Putative cyclin-dependent kinase inhibitor SPL2 (148 aa).

A phosphoserine mark is found at S59 and S86.

The protein resides in the cytoplasmic granule. It is found in the cytoplasm. Functionally, putative cyclin-dependent kinase (CDK) inhibitor necessary and sufficient for PHO pathway-dependent down-regulation of low-affinity phosphate transport. The polypeptide is Putative cyclin-dependent kinase inhibitor SPL2 (SPL2) (Saccharomyces cerevisiae (strain YJM789) (Baker's yeast)).